Here is a 266-residue protein sequence, read N- to C-terminus: Thymidylate synthase (266 aa).

Position 24 (R24) interacts with dUMP. H54 provides a ligand contact to (6R)-5,10-methylene-5,6,7,8-tetrahydrofolate. Residue 129–130 coordinates dUMP; the sequence is RR. C149 acts as the Nucleophile in catalysis. DUMP contacts are provided by residues 169–172, N180, and 210–212; these read RSAD and HIY. D172 contributes to the (6R)-5,10-methylene-5,6,7,8-tetrahydrofolate binding site. Residue A265 participates in (6R)-5,10-methylene-5,6,7,8-tetrahydrofolate binding.

The protein belongs to the thymidylate synthase family. Bacterial-type ThyA subfamily. In terms of assembly, homodimer.

It localises to the cytoplasm. The catalysed reaction is dUMP + (6R)-5,10-methylene-5,6,7,8-tetrahydrofolate = 7,8-dihydrofolate + dTMP. Its pathway is pyrimidine metabolism; dTTP biosynthesis. Catalyzes the reductive methylation of 2'-deoxyuridine-5'-monophosphate (dUMP) to 2'-deoxythymidine-5'-monophosphate (dTMP) while utilizing 5,10-methylenetetrahydrofolate (mTHF) as the methyl donor and reductant in the reaction, yielding dihydrofolate (DHF) as a by-product. This enzymatic reaction provides an intracellular de novo source of dTMP, an essential precursor for DNA biosynthesis. This chain is Thymidylate synthase, found in Mycolicibacterium paratuberculosis (strain ATCC BAA-968 / K-10) (Mycobacterium paratuberculosis).